Consider the following 128-residue polypeptide: Large ribosomal subunit protein bL19 (128 aa).

This sequence belongs to the bacterial ribosomal protein bL19 family.

Functionally, this protein is located at the 30S-50S ribosomal subunit interface and may play a role in the structure and function of the aminoacyl-tRNA binding site. In Azoarcus sp. (strain BH72), this protein is Large ribosomal subunit protein bL19.